A 275-amino-acid chain; its full sequence is Dihydroxyacetone phosphatase (275 aa).

Catalysis depends on Asp10, which acts as the Nucleophile. 3 residues coordinate Mg(2+): Asp10, Asp12, and Asp206. Asp12 functions as the Proton donor/acceptor in the catalytic mechanism.

It belongs to the HAD-like hydrolase superfamily. In terms of assembly, homohexamer. The cofactor is Mg(2+).

It carries out the reaction dihydroxyacetone phosphate + H2O = dihydroxyacetone + phosphate. In terms of biological role, catalyzes dephosphorylation of dihydroxyacetone phosphate (DHAP) to produce 1,3-dihydroxyacetone (DHA). Is the main enzyme responsible for DHA production from catabolism of sugars (glucose, fructose, and sucrose) in C.glutamicum. Displays no activity toward nucleoside monophosphates (AMP, CMP, GMP, or UMP). This Corynebacterium glutamicum (strain R) protein is Dihydroxyacetone phosphatase.